The following is a 335-amino-acid chain: Tetraacyldisaccharide 4'-kinase (335 aa).

58–65 provides a ligand contact to ATP; that stretch reads VVGGSGKT.

It belongs to the LpxK family.

It catalyses the reaction a lipid A disaccharide + ATP = a lipid IVA + ADP + H(+). The protein operates within glycolipid biosynthesis; lipid IV(A) biosynthesis; lipid IV(A) from (3R)-3-hydroxytetradecanoyl-[acyl-carrier-protein] and UDP-N-acetyl-alpha-D-glucosamine: step 6/6. In terms of biological role, transfers the gamma-phosphate of ATP to the 4'-position of a tetraacyldisaccharide 1-phosphate intermediate (termed DS-1-P) to form tetraacyldisaccharide 1,4'-bis-phosphate (lipid IVA). In Hydrogenovibrio crunogenus (strain DSM 25203 / XCL-2) (Thiomicrospira crunogena), this protein is Tetraacyldisaccharide 4'-kinase.